Consider the following 469-residue polypeptide: Repressible acid phosphatase (469 aa).

The first 16 residues, Met-1–Ala-16, serve as a signal peptide directing secretion. N-linked (GlcNAc...) asparagine glycans are attached at residues Asn-23 and Asn-31. The Nucleophile role is filled by His-77. 5 N-linked (GlcNAc...) asparagine glycosylation sites follow: Asn-129, Asn-201, Asn-229, Asn-250, and Asn-317. Asp-340 serves as the catalytic Proton donor. N-linked (GlcNAc...) asparagine glycosylation is found at Asn-392 and Asn-447.

This sequence belongs to the histidine acid phosphatase family. Glycosylated during secretion across the membrane.

The protein resides in the secreted. It catalyses the reaction a phosphate monoester + H2O = an alcohol + phosphate. The polypeptide is Repressible acid phosphatase (PHO5) (Kluyveromyces lactis (strain ATCC 8585 / CBS 2359 / DSM 70799 / NBRC 1267 / NRRL Y-1140 / WM37) (Yeast)).